Consider the following 300-residue polypeptide: MESVLDAFDQYLALERGRSDHTRRAYLGDLRSLFAFVDERTPGADLGSLTLPVLRAWLSAQAAAGTARTTLARRTSAVKTFTAWAVRRGLMASDPATRLQMPKARRTLPAVLRQDQARDALDAANSGAQQGDPLALRDRLIVEMLYATGIRVSELCGLDIDDVDTSRRLLRVLGKGDKQRTVPFGEPAEQALRAWLTSGRPALATAESGPALLLGARGRRLDPRQARTVVHETVGAVAGAPDIGPHGLRHSAATHLLEGGADLRIVQELLGHSTLATTQLYTHVTVARLRAVHDQAHPRA.

In terms of domain architecture, Core-binding (CB) spans 1 to 86 (MESVLDAFDQ…AVKTFTAWAV (86 aa)). In terms of domain architecture, Tyr recombinase spans 107–294 (TLPAVLRQDQ…TVARLRAVHD (188 aa)). Catalysis depends on residues arginine 151, lysine 175, histidine 246, arginine 249, and histidine 272. Tyrosine 281 serves as the catalytic O-(3'-phospho-DNA)-tyrosine intermediate.

It belongs to the 'phage' integrase family. XerC subfamily. As to quaternary structure, forms a cyclic heterotetrameric complex composed of two molecules of XerC and two molecules of XerD.

The protein resides in the cytoplasm. Site-specific tyrosine recombinase, which acts by catalyzing the cutting and rejoining of the recombining DNA molecules. The XerC-XerD complex is essential to convert dimers of the bacterial chromosome into monomers to permit their segregation at cell division. It also contributes to the segregational stability of plasmids. This is Tyrosine recombinase XerC from Mycobacterium sp. (strain JLS).